The primary structure comprises 172 residues: Adenylate kinase isoenzyme 6 (172 aa).

Residues Gly13, Gly15, Lys16, Thr17, and Thr18 each coordinate ATP. An NMPbind region spans residues 33 to 56; sequence NVGDLAREGHLYDGYDEEYGCPIL. Residues 108–118 form an LID region; the sequence is TRGYHEKKLQD. Arg109 lines the ATP pocket.

Belongs to the adenylate kinase family. AK6 subfamily. As to quaternary structure, monomer and homodimer. Interacts with small ribosomal subunit protein uS11. Not a structural component of 43S pre-ribosomes, but transiently interacts with them by binding to uS11. Interacts with COIL (via C-terminus).

Its subcellular location is the cytoplasm. The protein localises to the nucleus. It localises to the nucleoplasm. It is found in the cajal body. The catalysed reaction is AMP + ATP = 2 ADP. It catalyses the reaction ATP + H2O = ADP + phosphate + H(+). In terms of biological role, broad-specificity nucleoside monophosphate (NMP) kinase that catalyzes the reversible transfer of the terminal phosphate group between nucleoside triphosphates and monophosphates. Also has ATPase activity. Involved in the late cytoplasmic maturation steps of the 40S ribosomal particles, specifically 18S rRNA maturation. While NMP activity is not required for ribosome maturation, ATPase activity is. Associates transiently with small ribosomal subunit protein uS11. ATP hydrolysis breaks the interaction with uS11. May temporarily remove uS11 from the ribosome to enable a conformational change of the ribosomal RNA that is needed for the final maturation step of the small ribosomal subunit. Its NMP activity may have a role in nuclear energy homeostasis. May be involved in regulation of Cajal body (CB) formation. This Rattus norvegicus (Rat) protein is Adenylate kinase isoenzyme 6.